We begin with the raw amino-acid sequence, 760 residues long: 5-methyltetrahydropteroyltriglutamate--homocysteine methyltransferase (760 aa).

5-methyltetrahydropteroyltri-L-glutamate is bound by residues 17–20 and K118; that span reads RELK. Residues 434-436 and E487 contribute to the L-homocysteine site; that span reads IGS. L-methionine-binding positions include 434-436 and E487; that span reads IGS. Residues 518–519 and W564 each bind 5-methyltetrahydropteroyltri-L-glutamate; that span reads RC. D602 provides a ligand contact to L-homocysteine. D602 is an L-methionine binding site. E608 contacts 5-methyltetrahydropteroyltri-L-glutamate. 3 residues coordinate Zn(2+): H644, C646, and E668. Catalysis depends on H697, which acts as the Proton donor. A Zn(2+)-binding site is contributed by C729.

The protein belongs to the vitamin-B12 independent methionine synthase family. Zn(2+) is required as a cofactor.

The enzyme catalyses 5-methyltetrahydropteroyltri-L-glutamate + L-homocysteine = tetrahydropteroyltri-L-glutamate + L-methionine. The protein operates within amino-acid biosynthesis; L-methionine biosynthesis via de novo pathway; L-methionine from L-homocysteine (MetE route): step 1/1. In terms of biological role, catalyzes the transfer of a methyl group from 5-methyltetrahydrofolate to homocysteine resulting in methionine formation. The polypeptide is 5-methyltetrahydropteroyltriglutamate--homocysteine methyltransferase (Buchnera aphidicola subsp. Cinara cedri (strain Cc)).